Reading from the N-terminus, the 457-residue chain is Transcription factor E2F3 (457 aa).

The segment at Leu-80 to Tyr-171 is disordered. Residues Ser-93–Ser-102 are compositionally biased toward polar residues. The segment at Thr-96–Pro-145 is cyclin A/CDK2 binding. Residues Gly-147–Ser-237 mediate DNA binding. The span at Ser-155 to Ser-164 shows a compositional bias: low complexity. A leucine-zipper region spans residues Leu-196–Leu-217. Positions Glu-201 to Ser-237 match the DEF box motif. A dimerization region spans residues Leu-238–Ile-329. A disordered region spans residues His-350–Ala-387. Residues Asp-371–Ala-387 are compositionally biased toward polar residues. Positions Ser-383–Ser-457 are transactivation. Positions Glu-424–Asp-441 are retinoblastoma protein binding.

The protein belongs to the E2F/DP family. In terms of assembly, component of the DRTF1/E2F transcription factor complex. Binds cooperatively with TFDP1/Dp-1 to E2F sites. Interacts with retinoblastoma protein RB1 and related proteins (such as RBL1) that inhibit the E2F transactivation domain. Binds EAPP.

The protein resides in the nucleus. In terms of biological role, transcription activator that binds DNA cooperatively with DP proteins through the E2 recognition site, 5'-TTTC[CG]CGC-3' found in the promoter region of a number of genes whose products are involved in cell cycle regulation or in DNA replication. The DRTF1/E2F complex functions in the control of cell-cycle progression from G1 to S phase. E2F3 binds specifically to RB1 in a cell-cycle dependent manner. Inhibits adipogenesis, probably through the repression of CEBPA binding to its target gene promoters. The sequence is that of Transcription factor E2F3 (E2f3) from Mus musculus (Mouse).